The primary structure comprises 198 residues: Neutrophil gelatinase-associated lipocalin (198 aa).

An N-terminal signal peptide occupies residues 1-20; the sequence is MPLGLLWLGLALLGALHAQA. Gln-21 is subject to Pyrrolidone carboxylic acid. An a carboxymycobactin-binding site is contributed by 72-74; sequence YAT. Asn-85 carries N-linked (GlcNAc...) asparagine glycosylation. Residues Cys-96 and Cys-195 are joined by a disulfide bond. Tyr-126 is a binding site for enterobactin. A carboxymycobactin is bound by residues Lys-145, Lys-154, and Tyr-158. Residue Lys-154 participates in enterobactin binding.

Belongs to the calycin superfamily. Lipocalin family. As to quaternary structure, monomer. Homodimer; disulfide-linked. Heterodimer; disulfide-linked with MMP9. In terms of tissue distribution, detected in neutrophils (at protein level). Expressed in bone marrow and in tissues that are prone to exposure to microorganism. High expression is found in bone marrow as well as in uterus, prostate, salivary gland, stomach, appendix, colon, trachea and lung. Expressed in the medullary tubules of the kidney. Not found in the small intestine or peripheral blood leukocytes.

It localises to the secreted. The protein localises to the cytoplasmic granule lumen. Its subcellular location is the cytoplasmic vesicle lumen. In terms of biological role, iron-trafficking protein involved in multiple processes such as apoptosis, innate immunity and renal development. Binds iron through association with 2,3-dihydroxybenzoic acid (2,3-DHBA), a siderophore that shares structural similarities with bacterial enterobactin, and delivers or removes iron from the cell, depending on the context. Iron-bound form (holo-24p3) is internalized following binding to the SLC22A17 (24p3R) receptor, leading to release of iron and subsequent increase of intracellular iron concentration. In contrast, association of the iron-free form (apo-24p3) with the SLC22A17 (24p3R) receptor is followed by association with an intracellular siderophore, iron chelation and iron transfer to the extracellular medium, thereby reducing intracellular iron concentration. Involved in apoptosis due to interleukin-3 (IL3) deprivation: iron-loaded form increases intracellular iron concentration without promoting apoptosis, while iron-free form decreases intracellular iron levels, inducing expression of the proapoptotic protein BCL2L11/BIM, resulting in apoptosis. Involved in innate immunity; limits bacterial proliferation by sequestering iron bound to microbial siderophores, such as enterobactin. Can also bind siderophores from M.tuberculosis. The protein is Neutrophil gelatinase-associated lipocalin (LCN2) of Homo sapiens (Human).